The chain runs to 627 residues: RNA interference defective protein 10 (627 aa).

Disordered regions lie at residues 1–31 (MSNH…VRQN), 467–487 (QRDT…HDQY), and 523–589 (SSVR…SEDY). Basic and acidic residues-rich tracts occupy residues 7–16 (NFRDYQREGI), 467–478 (QRDTDEQYDVHQ), and 526–537 (REPEHPSARSRD).

The protein belongs to the maelstrom family. Interacts with rde-11 (via RING-type zinc finger domain). Interacts with ergo-1.

In complex with rde-11, required in the endogenous and exogenous siRNA pathway for biogenesis and accumulation of secondary small interfering RNA (siRNA) intermediates, such as 22G-siRNAs derived from ergo-1 targets. The polypeptide is RNA interference defective protein 10 (Caenorhabditis elegans).